A 200-amino-acid polypeptide reads, in one-letter code: Recombination protein RecR (200 aa).

Residues 58–73 (CSLCCNLTDEDPCSIC) form a C4-type zinc finger. In terms of domain architecture, Toprim spans 81–176 (NLLCVVEEPR…KVTRIAHGIP (96 aa)).

It belongs to the RecR family.

May play a role in DNA repair. It seems to be involved in an RecBC-independent recombinational process of DNA repair. It may act with RecF and RecO. This is Recombination protein RecR from Desulforamulus reducens (strain ATCC BAA-1160 / DSM 100696 / MI-1) (Desulfotomaculum reducens).